A 410-amino-acid chain; its full sequence is Probable serine/threonine-protein kinase PBL8 (410 aa).

Residues 1 to 10 (MGNCGTRDEA) show a composition bias toward basic and acidic residues. The tract at residues 1-45 (MGNCGTRDEAAVFTPQAQAQQLQKKHSRSVSDLSDPSTPRFRDDS) is disordered. The N-myristoyl glycine moiety is linked to residue Gly2. Residue Cys4 is the site of S-palmitoyl cysteine attachment. Thr58 bears the Phosphothreonine mark. One can recognise a Protein kinase domain in the interval 69–350 (FRPDYILGEG…DVVETLEPLQ (282 aa)). ATP is bound by residues 75–83 (LGEGGFGTV) and Lys104. Phosphotyrosine is present on Tyr149. The active-site Proton acceptor is the Asp199. Phosphoserine occurs at positions 203 and 233. 2 positions are modified to phosphothreonine: Thr234 and Thr239. Tyr247 is subject to Phosphotyrosine.

It belongs to the protein kinase superfamily. Ser/Thr protein kinase family. As to quaternary structure, interacts with the Xanthomonas campestris effector XopAC/AvrAC.

It is found in the cell membrane. It carries out the reaction L-seryl-[protein] + ATP = O-phospho-L-seryl-[protein] + ADP + H(+). The catalysed reaction is L-threonyl-[protein] + ATP = O-phospho-L-threonyl-[protein] + ADP + H(+). Its function is as follows. May be involved in plant defense signaling. The sequence is that of Probable serine/threonine-protein kinase PBL8 from Arabidopsis thaliana (Mouse-ear cress).